Here is a 596-residue protein sequence, read N- to C-terminus: NADH-quinone oxidoreductase subunit C/D (596 aa).

The interval 1 to 186 (MMNDNKYIHI…PAFTLTRKKE (186 aa)) is NADH dehydrogenase I subunit C. The segment at 210–596 (DFMFLNLGPN…IDFVMSDVDR (387 aa)) is NADH dehydrogenase I subunit D.

This sequence in the N-terminal section; belongs to the complex I 30 kDa subunit family. In the C-terminal section; belongs to the complex I 49 kDa subunit family. NDH-1 is composed of 13 different subunits. Subunits NuoB, CD, E, F, and G constitute the peripheral sector of the complex.

It localises to the cell inner membrane. The catalysed reaction is a quinone + NADH + 5 H(+)(in) = a quinol + NAD(+) + 4 H(+)(out). Its function is as follows. NDH-1 shuttles electrons from NADH, via FMN and iron-sulfur (Fe-S) centers, to quinones in the respiratory chain. The immediate electron acceptor for the enzyme in this species is believed to be ubiquinone. Couples the redox reaction to proton translocation (for every two electrons transferred, four hydrogen ions are translocated across the cytoplasmic membrane), and thus conserves the redox energy in a proton gradient. The sequence is that of NADH-quinone oxidoreductase subunit C/D from Blochmanniella floridana.